A 70-amino-acid chain; its full sequence is Large ribosomal subunit protein eL38 (70 aa).

A Glycyl lysine isopeptide (Lys-Gly) (interchain with G-Cter in SUMO2) cross-link involves residue Lys-4. Lys-9 carries the N6-acetyllysine; alternate modification. Residue Lys-9 forms a Glycyl lysine isopeptide (Lys-Gly) (interchain with G-Cter in SUMO2); alternate linkage. Residue Lys-67 is modified to N6-acetyllysine.

Belongs to the eukaryotic ribosomal protein eL38 family. As to quaternary structure, component of the large ribosomal subunit.

The protein resides in the cytoplasm. Functionally, component of the large ribosomal subunit. The ribosome is a large ribonucleoprotein complex responsible for the synthesis of proteins in the cell. This Homo sapiens (Human) protein is Large ribosomal subunit protein eL38 (RPL38).